An 85-amino-acid chain; its full sequence is Large ribosomal subunit protein bL27 (85 aa).

The disordered stretch occupies residues 1–21 (MAHKKGGGSTKNGRDSNPKYL).

It belongs to the bacterial ribosomal protein bL27 family.

In Chlorobium chlorochromatii (strain CaD3), this protein is Large ribosomal subunit protein bL27.